An 813-amino-acid chain; its full sequence is Calpain-7 (813 aa).

The residue at position 1 (methionine 1) is an N-acetylmethionine. Threonine 95 carries the post-translational modification Phosphothreonine. The 309-residue stretch at arginine 232–proline 540 folds into the Calpain catalytic domain. Residues cysteine 290, histidine 458, and asparagine 478 contribute to the active site. The domain III stretch occupies residues glycine 541–alanine 701. The segment at glycine 702–glutamine 813 is domain N.

Belongs to the peptidase C2 family.

The protein localises to the nucleus. Its function is as follows. Calcium-regulated non-lysosomal thiol-protease. This is Calpain-7 (CAPN7) from Sus scrofa (Pig).